The sequence spans 899 residues: Bifunctional uridylyltransferase/uridylyl-removing enzyme (899 aa).

Residues 1–342 (MPQMDPELFD…RAGESGPATP (342 aa)) are uridylyltransferase. The uridylyl-removing stretch occupies residues 343-705 (LNSRFQVRDG…TTQREFEGGT (363 aa)). Positions 461 to 583 (VDAHTLNLIK…VGDQTHLDYL (123 aa)) constitute an HD domain. ACT domains are found at residues 706–784 (QIFI…DEYP) and 816–897 (ILEL…SLQI).

The protein belongs to the GlnD family. It depends on Mg(2+) as a cofactor.

It catalyses the reaction [protein-PII]-L-tyrosine + UTP = [protein-PII]-uridylyl-L-tyrosine + diphosphate. The enzyme catalyses [protein-PII]-uridylyl-L-tyrosine + H2O = [protein-PII]-L-tyrosine + UMP + H(+). With respect to regulation, uridylyltransferase (UTase) activity is inhibited by glutamine, while glutamine activates uridylyl-removing (UR) activity. Its function is as follows. Modifies, by uridylylation and deuridylylation, the PII regulatory proteins (GlnB and homologs), in response to the nitrogen status of the cell that GlnD senses through the glutamine level. Under low glutamine levels, catalyzes the conversion of the PII proteins and UTP to PII-UMP and PPi, while under higher glutamine levels, GlnD hydrolyzes PII-UMP to PII and UMP (deuridylylation). Thus, controls uridylylation state and activity of the PII proteins, and plays an important role in the regulation of nitrogen assimilation and metabolism. This chain is Bifunctional uridylyltransferase/uridylyl-removing enzyme, found in Ectopseudomonas mendocina (strain ymp) (Pseudomonas mendocina).